The primary structure comprises 231 residues: LexA repressor (231 aa).

Residues 1–24 (MTDRKEHKMKPGRRPTEGMTPSQE) form a disordered region. The segment at residues 43 to 62 (VKEIAEALGMKTPSAHEQVQ) is a DNA-binding region (H-T-H motif). Active-site for autocatalytic cleavage activity residues include Ser-146 and Lys-183.

It belongs to the peptidase S24 family. In terms of assembly, homodimer.

It carries out the reaction Hydrolysis of Ala-|-Gly bond in repressor LexA.. In terms of biological role, represses a number of genes involved in the response to DNA damage (SOS response), including recA and lexA. In the presence of single-stranded DNA, RecA interacts with LexA causing an autocatalytic cleavage which disrupts the DNA-binding part of LexA, leading to derepression of the SOS regulon and eventually DNA repair. In Magnetococcus marinus (strain ATCC BAA-1437 / JCM 17883 / MC-1), this protein is LexA repressor.